A 456-amino-acid chain; its full sequence is Arginine biosynthesis bifunctional protein ArgJ, mitochondrial (456 aa).

Substrate-binding residues include Thr184, Lys213, Thr224, Glu311, Asn451, and Thr456. Catalysis depends on Thr224, which acts as the Nucleophile.

This sequence belongs to the ArgJ family. In terms of assembly, heterodimer of an alpha and a beta chain. The alpha and beta chains are autoproteolytically processed from a single precursor protein within the mitochondrion.

Its subcellular location is the mitochondrion matrix. It carries out the reaction N(2)-acetyl-L-ornithine + L-glutamate = N-acetyl-L-glutamate + L-ornithine. The enzyme catalyses L-glutamate + acetyl-CoA = N-acetyl-L-glutamate + CoA + H(+). It participates in amino-acid biosynthesis; L-arginine biosynthesis; L-ornithine and N-acetyl-L-glutamate from L-glutamate and N(2)-acetyl-L-ornithine (cyclic): step 1/1. It functions in the pathway amino-acid biosynthesis; L-arginine biosynthesis; N(2)-acetyl-L-ornithine from L-glutamate: step 1/4. Its function is as follows. Catalyzes two activities which are involved in the cyclic version of arginine biosynthesis: the synthesis of acetylglutamate from glutamate and acetyl-CoA, and of ornithine by transacetylation between acetylornithine and glutamate. The chain is Arginine biosynthesis bifunctional protein ArgJ, mitochondrial from Aspergillus niger (strain ATCC MYA-4892 / CBS 513.88 / FGSC A1513).